A 245-amino-acid polypeptide reads, in one-letter code: Polynucleotide 3'-phosphatase (245 aa).

It belongs to the DNA 3' phosphatase family.

It localises to the nucleus. It carries out the reaction a 3'end (2'-deoxyribonucleotide 3'-phosphate)-DNA + H2O = a 3'-end 2'-deoxyribonucleotide-DNA + phosphate. Functionally, dephosphorylate DNA's 3'-phosphate termini. Has a role in the repair of breaks in single-stranded DNA. This Saccharomyces mikatae (Yeast) protein is Polynucleotide 3'-phosphatase (TPP1).